The chain runs to 350 residues: Probable peptidyl-alpha-hydroxyglycine alpha-amidating lyase pgal-1 (350 aa).

The first 19 residues, 1 to 19 (MRASTACLVALLAPFYISA), serve as a signal peptide directing secretion. One copy of the NHL 1 repeat lies at 46–90 (DRELIGLFNPSKEIGQVSGLAVNKNGHIVAFHRSGRVWDEKSFND). N-linked (GlcNAc...) asparagine glycosylation is present at N103. NHL repeat units lie at residues 113–154 (KKVI…IDAK), 162–206 (LGEK…FDAK), and 212–256 (QINA…FSAG). 2 cysteine pairs are disulfide-bonded: C176–C196 and C241–C252.

The protein belongs to the peptidyl-alpha-hydroxyglycine alpha-amidating lyase family. The cofactor is Zn(2+).

The protein localises to the secreted. The catalysed reaction is a [peptide]-C-terminal (2S)-2-hydroxyglycine = a [peptide]-C-terminal amide + glyoxylate. In terms of biological role, probable lyase that catalyzes an essential reaction in C-terminal alpha-amidation of peptides. Mediates the dismutation of the unstable peptidyl(2-hydroxyglycine) intermediate to glyoxylate and the corresponding desglycine peptide amide. C-terminal amidation of peptides such as neuropeptides is essential for full biological activity. This chain is Probable peptidyl-alpha-hydroxyglycine alpha-amidating lyase pgal-1, found in Caenorhabditis elegans.